Here is a 411-residue protein sequence, read N- to C-terminus: Zinc finger protein draculin (411 aa).

The tract at residues 1-33 is disordered; it reads MKNTTKPCRTEHHNAEGQRDRMEGNKKGETKAK. The segment covering 8–32 has biased composition (basic and acidic residues); it reads CRTEHHNAEGQRDRMEGNKKGETKA. C2H2-type zinc fingers lie at residues 36–58, 64–86, 92–114, 120–142, 148–170, 176–198, 204–226, 232–254, 260–282, 288–310, 316–338, 344–366, and 372–394; these read VACS…MRVH, YRCD…LDIH, YTCD…MTLH, YKCD…MKLH, HKCE…LMVH, YTCD…MNIH, YTCD…MRFH, FTCD…MKIH, YTCD…MTHH, FHCD…IKTH, YSCL…EKRH, FMCF…LPVH, and YMCS…EKTH.

As to expression, specifically expressed in the hematopoietic lineage during embryogenesis; first expressed at the late blastula stage around the blastoderm margin. During gastrulation, restricted to the ventral mesoderm, the presumptive prechordal plate and the dorso-marginal cells of the organizer. At the 3-somite stage, strongly expressed in a caudal domain (marking the erythroid lineage) and a cephalic domain of the lateral mesoderm. At the 8- to 10-somite stage, caudal expression is in two bands of lateral mesoderm which later converge at the midline. Anterior expression is also in two bands of lateral mesoderm which converge as two patches at the midline by the 15-somite stage, with increased scattering of single cells (macrophage precursors) away from the midline to the yolksac. Once at the yolksac, expression is lost. By 20-24 hours post-fertilization (hpf), expressed in proerythroblasts in the erythroid blood island centered above the uro-genital opening. Expression persists in circulating erythroblasts but is lost in mature erythrocytes.

The chain is Zinc finger protein draculin from Danio rerio (Zebrafish).